Reading from the N-terminus, the 153-residue chain is 6,7-dimethyl-8-ribityllumazine synthase (153 aa).

Residues F23, 57–59 (AYE), and 81–83 (AVI) contribute to the 5-amino-6-(D-ribitylamino)uracil site. 86–87 (AT) provides a ligand contact to (2S)-2-hydroxy-3-oxobutyl phosphate. The active-site Proton donor is the H89. F113 is a 5-amino-6-(D-ribitylamino)uracil binding site. Residue R127 participates in (2S)-2-hydroxy-3-oxobutyl phosphate binding.

The protein belongs to the DMRL synthase family.

It carries out the reaction (2S)-2-hydroxy-3-oxobutyl phosphate + 5-amino-6-(D-ribitylamino)uracil = 6,7-dimethyl-8-(1-D-ribityl)lumazine + phosphate + 2 H2O + H(+). It functions in the pathway cofactor biosynthesis; riboflavin biosynthesis; riboflavin from 2-hydroxy-3-oxobutyl phosphate and 5-amino-6-(D-ribitylamino)uracil: step 1/2. Functionally, catalyzes the formation of 6,7-dimethyl-8-ribityllumazine by condensation of 5-amino-6-(D-ribitylamino)uracil with 3,4-dihydroxy-2-butanone 4-phosphate. This is the penultimate step in the biosynthesis of riboflavin. This chain is 6,7-dimethyl-8-ribityllumazine synthase, found in Leptospira borgpetersenii serovar Hardjo-bovis (strain JB197).